Here is a 526-residue protein sequence, read N- to C-terminus: Protein MGF 505-2R (526 aa).

This sequence belongs to the asfivirus MGF 505 family.

Functionally, plays a role in virus cell tropism, and may be required for efficient virus replication in macrophages. The chain is Protein MGF 505-2R from African swine fever virus (isolate Pig/Kenya/KEN-50/1950) (ASFV).